The primary structure comprises 334 residues: Glycerol-1-phosphate dehydrogenase [NAD(P)+] (334 aa).

NAD(+)-binding positions include 77 to 81 (GRPID) and 99 to 102 (TTAS). A substrate-binding site is contributed by Asp104. Residue Ser108 coordinates NAD(+). Asp147 lines the substrate pocket. The Zn(2+) site is built by Asp147 and His225. A substrate-binding site is contributed by His229. Zn(2+) is bound at residue His246.

Belongs to the glycerol-1-phosphate dehydrogenase family. Requires Zn(2+) as cofactor.

It is found in the cytoplasm. It carries out the reaction sn-glycerol 1-phosphate + NAD(+) = dihydroxyacetone phosphate + NADH + H(+). The enzyme catalyses sn-glycerol 1-phosphate + NADP(+) = dihydroxyacetone phosphate + NADPH + H(+). The protein operates within membrane lipid metabolism; glycerophospholipid metabolism. Catalyzes the NAD(P)H-dependent reduction of dihydroxyacetonephosphate (DHAP or glycerone phosphate) to glycerol 1-phosphate (G1P). The G1P thus generated is used as the glycerophosphate backbone of phospholipids in the cellular membranes of Archaea. This is Glycerol-1-phosphate dehydrogenase [NAD(P)+] from Methanococcus maripaludis (strain C6 / ATCC BAA-1332).